A 182-amino-acid chain; its full sequence is ADP-ribosylation factor-like protein 3 (182 aa).

G2 is lipidated: N-myristoyl glycine. S5 is subject to Phosphoserine. GTP contacts are provided by residues 24-31 (GLDNAGKT), T48, 67-71 (DIGGQ), G70, 126-129 (NKQD), and 159-161 (SAL). Residues T31 and T48 each coordinate Mg(2+).

Belongs to the small GTPase superfamily. Arf family. In terms of assembly, found in a complex with ARL3, RP2 and UNC119 (or UNC119B); RP2 induces hydrolysis of GTP ARL3 in the complex, leading to the release of UNC119 (or UNC119B). Interacts with RP2; interaction is direct and stimulated with the activated GTP-bound form of ARL3. Interacts with SYS1. Interacts with ARL2BP; the GTP-bound form interacts with ARL2BP. Microtubule-associated protein. Does not interact with TBCC. Interacts with RP2. Interacts with PDE6D; the interaction occurs specifically with the GTP-bound form of ARL3. Interacts with GGA1; the interaction recruits PKD1:PKD2 complex to trans-Golgi network and is required for ciliary targeting of PKD1:PKD2 complex. Interacts with DNAAF9.

The protein localises to the golgi apparatus membrane. It localises to the cytoplasm. The protein resides in the cytoskeleton. It is found in the spindle. Its subcellular location is the nucleus. The protein localises to the microtubule organizing center. It localises to the centrosome. The protein resides in the cell projection. It is found in the cilium. In terms of biological role, small GTP-binding protein which cycles between an inactive GDP-bound and an active GTP-bound form, and the rate of cycling is regulated by guanine nucleotide exchange factors (GEF) and GTPase-activating proteins (GAP). Required for normal cytokinesis and cilia signaling. Requires assistance from GTPase-activating proteins (GAPs) like RP2 and PDE6D, in order to cycle between inactive GDP-bound and active GTP-bound forms. Required for targeting proteins to the cilium, including myristoylated NPHP3 and prenylated INPP5E. Targets NPHP3 to the ciliary membrane by releasing myristoylated NPHP3 from UNC119B cargo adapter into the cilium. Required for PKD1:PKD2 complex targeting from the trans-Golgi network to the cilium. The polypeptide is ADP-ribosylation factor-like protein 3 (Arl3) (Rattus norvegicus (Rat)).